Reading from the N-terminus, the 562-residue chain is Dihydroxy-acid dehydratase (562 aa).

Cys53 contributes to the [2Fe-2S] cluster binding site. Asp85 is a binding site for Mg(2+). Cys126 contacts [2Fe-2S] cluster. Residues Asp127 and Lys128 each contribute to the Mg(2+) site. Lys128 bears the N6-carboxylysine mark. Residue Cys198 coordinates [2Fe-2S] cluster. Glu449 is a Mg(2+) binding site. The active-site Proton acceptor is Ser475.

It belongs to the IlvD/Edd family. In terms of assembly, homodimer. It depends on [2Fe-2S] cluster as a cofactor. Mg(2+) is required as a cofactor.

It carries out the reaction (2R)-2,3-dihydroxy-3-methylbutanoate = 3-methyl-2-oxobutanoate + H2O. The enzyme catalyses (2R,3R)-2,3-dihydroxy-3-methylpentanoate = (S)-3-methyl-2-oxopentanoate + H2O. The protein operates within amino-acid biosynthesis; L-isoleucine biosynthesis; L-isoleucine from 2-oxobutanoate: step 3/4. Its pathway is amino-acid biosynthesis; L-valine biosynthesis; L-valine from pyruvate: step 3/4. Its function is as follows. Functions in the biosynthesis of branched-chain amino acids. Catalyzes the dehydration of (2R,3R)-2,3-dihydroxy-3-methylpentanoate (2,3-dihydroxy-3-methylvalerate) into 2-oxo-3-methylpentanoate (2-oxo-3-methylvalerate) and of (2R)-2,3-dihydroxy-3-methylbutanoate (2,3-dihydroxyisovalerate) into 2-oxo-3-methylbutanoate (2-oxoisovalerate), the penultimate precursor to L-isoleucine and L-valine, respectively. In Methylococcus capsulatus (strain ATCC 33009 / NCIMB 11132 / Bath), this protein is Dihydroxy-acid dehydratase.